A 249-amino-acid chain; its full sequence is 3-deoxy-manno-octulosonate cytidylyltransferase (249 aa).

It belongs to the KdsB family.

The protein resides in the cytoplasm. It catalyses the reaction 3-deoxy-alpha-D-manno-oct-2-ulosonate + CTP = CMP-3-deoxy-beta-D-manno-octulosonate + diphosphate. It functions in the pathway nucleotide-sugar biosynthesis; CMP-3-deoxy-D-manno-octulosonate biosynthesis; CMP-3-deoxy-D-manno-octulosonate from 3-deoxy-D-manno-octulosonate and CTP: step 1/1. Its pathway is bacterial outer membrane biogenesis; lipopolysaccharide biosynthesis. Activates KDO (a required 8-carbon sugar) for incorporation into bacterial lipopolysaccharide in Gram-negative bacteria. The chain is 3-deoxy-manno-octulosonate cytidylyltransferase from Aliivibrio salmonicida (strain LFI1238) (Vibrio salmonicida (strain LFI1238)).